The primary structure comprises 353 residues: Protein XRP2 (353 aa).

Positions 1–37 (MGCFFSKKAKRKRNSEEEQPQQDGEEPKQYSWDKREK) are disordered. Gly-2 carries the N-myristoyl glycine lipid modification. A lipid anchor (S-palmitoyl cysteine) is attached at Cys-3. Over residues 25-37 (EEPKQYSWDKREK) the composition is skewed to basic and acidic residues. One can recognise a C-CAP/cofactor C-like domain in the interval 27 to 182 (PKQYSWDKRE…TWSNIHDFTP (156 aa)). GTP is bound by residues 101–102 (GS) and 118–121 (QQFR).

Belongs to the TBCC family. Post-translationally, myristoylated on Gly-2; which may be required for membrane targeting. In terms of processing, palmitoylated on Cys-3; which may be required for plasma membrane targeting.

It is found in the cell membrane. Functionally, acts as a GTPase-activating protein (GAP) for tubulin in concert with tubulin-specific chaperone C, but does not enhance tubulin heterodimerization. Acts as a GTPase-activating protein. May act as guanine nucleotide dissociation inhibitor towards ADP-ribosylation factor-like proteins. The sequence is that of Protein XRP2 (rp2) from Xenopus laevis (African clawed frog).